A 548-amino-acid polypeptide reads, in one-letter code: Probable aquaglyceroporin-4 (548 aa).

The span at 1–22 shows a compositional bias: polar residues; sequence MAGTQDQSQDYFSKPTTPSTPG. Disordered stretches follow at residues 1–63, 76–101, and 158–270; these read MAGT…LPST, SRGF…SHFH, and KEET…ESGD. Residues 1 to 290 lie on the Cytoplasmic side of the membrane; it reads MAGTQDQSQD…ARLRARHPEP (290 aa). Positions 38–48 are enriched in basic and acidic residues; sequence PDRESGTERAK. Composition is skewed to polar residues over residues 77 to 97 and 171 to 200; these read RGFS…PQHS and SRTT…SRTT. Residues 249–265 are compositionally biased toward basic and acidic residues; the sequence is PDFKVDGEPLGHQEKPC. The helical transmembrane segment at 291–311 threads the bilayer; that stretch reads LAEFLATAVAIFLGLTGTLSV. N312 is a glycosylation site (N-linked (GlcNAc...) asparagine). Over 312–327 the chain is Extracellular; sequence NLSATQSQPYGTYETS. A helical transmembrane segment spans residues 328–348; sequence CWAWGFAWMFGIYLGGGVSGA. Residues 349 to 369 lie on the Cytoplasmic side of the membrane; the sequence is HMNPAISVSLSIFRGFPWRQC. The short motif at 351–353 is the NPA 1 element; that stretch reads NPA. Residues 370-390 traverse the membrane as a helical segment; sequence VIYVFVQFIASIVAGALAYAM. Over 391-420 the chain is Extracellular; that stretch reads YADSINHVDPDMTKMSMTFFSTPREWVTLK. Residues 421–441 form a helical membrane-spanning segment; it reads SAFFNQVVGSAIMMIAVFALG. Over 442-448 the chain is Cytoplasmic; sequence DDQNNPP. The helical transmembrane segment at 449-469 threads the bilayer; that stretch reads GAGMHALVLGFLVTTLKFTLG. The Extracellular segment spans residues 470-508; sequence YNIGSALNPASDFGPRVIAYAVGFRGDNVFHSGWWFYGP. The short motif at 477–479 is the NPA 2 element; the sequence is NPA. Residues 509-529 form a helical membrane-spanning segment; that stretch reads WAATLIGSLLGCTLYDGFVFV. Residues 530 to 548 lie on the Cytoplasmic side of the membrane; sequence GSESPVNFRVDKRVKKLFN.

Belongs to the MIP/aquaporin (TC 1.A.8) family.

It is found in the membrane. It catalyses the reaction H2O(in) = H2O(out). It carries out the reaction glycerol(in) = glycerol(out). Probable water/glycerol channel that may have redundant functions with FgAQP2. The polypeptide is Probable aquaglyceroporin-4 (Gibberella zeae (strain ATCC MYA-4620 / CBS 123657 / FGSC 9075 / NRRL 31084 / PH-1) (Wheat head blight fungus)).